The primary structure comprises 369 residues: MAKFELYAEVDVSISGHQYPIIICRNGLIDPDLINRFITSKQVLIVTNRTVAPLYLGHLQSVLPSKQCDVVILEDGEEHKNQRSLFTIYDSLIQNKHHRDTSIIALGGGVIGDMAGFAASTYQRGVRFIQLPTTLLAQVDASVGGKTAINHPAGKNMIGSFYQPQAVIIDLNTLKTLPEREFRAGIAEMIKYALLVGGSFFERIQEVLQQGLTVHSPELPLLIAECCQVKAKIVEQDERESGLRALLNLGHTFAHALETYTDYKKWLHGEAVAIGLYCAAVLSEKKGLLDKPIVDQVEKMLIHAGLPHKIPNSIDLIQLRELMSLDKKIKNNCLRFVMIKKPGACYIDDSVTEDCLHNTLINVVEGEQK.

NAD(+)-binding positions include 75–80 (DGEEHK), 109–113 (GVIGD), 133–134 (TT), Lys-146, Lys-155, and 173–176 (TLKT). Residues Glu-188, His-251, and His-268 each coordinate Zn(2+).

Belongs to the sugar phosphate cyclases superfamily. Dehydroquinate synthase family. Co(2+) is required as a cofactor. Zn(2+) serves as cofactor. Requires NAD(+) as cofactor.

Its subcellular location is the cytoplasm. The enzyme catalyses 7-phospho-2-dehydro-3-deoxy-D-arabino-heptonate = 3-dehydroquinate + phosphate. The protein operates within metabolic intermediate biosynthesis; chorismate biosynthesis; chorismate from D-erythrose 4-phosphate and phosphoenolpyruvate: step 2/7. Its function is as follows. Catalyzes the conversion of 3-deoxy-D-arabino-heptulosonate 7-phosphate (DAHP) to dehydroquinate (DHQ). The chain is 3-dehydroquinate synthase from Legionella pneumophila (strain Paris).